We begin with the raw amino-acid sequence, 553 residues long: Formate--tetrahydrofolate ligase (553 aa).

56–63 (TPKGEGKT) provides a ligand contact to ATP.

This sequence belongs to the formate--tetrahydrofolate ligase family.

The enzyme catalyses (6S)-5,6,7,8-tetrahydrofolate + formate + ATP = (6R)-10-formyltetrahydrofolate + ADP + phosphate. It functions in the pathway one-carbon metabolism; tetrahydrofolate interconversion. This chain is Formate--tetrahydrofolate ligase, found in Haloarcula marismortui (strain ATCC 43049 / DSM 3752 / JCM 8966 / VKM B-1809) (Halobacterium marismortui).